A 431-amino-acid polypeptide reads, in one-letter code: Adenylosuccinate lyase (431 aa).

N(6)-(1,2-dicarboxyethyl)-AMP is bound by residues arginine 4 to tyrosine 5, arginine 67 to aspartate 69, and threonine 93 to serine 94. The Proton donor/acceptor role is filled by histidine 141. Position 212 (glutamine 212) interacts with N(6)-(1,2-dicarboxyethyl)-AMP. Serine 262 (proton donor/acceptor) is an active-site residue. N(6)-(1,2-dicarboxyethyl)-AMP-binding positions include serine 263, lysine 268–asparagine 270, and serine 307–valine 311.

Belongs to the lyase 1 family. Adenylosuccinate lyase subfamily. Homooligomer. Residues from neighboring subunits contribute catalytic and substrate-binding residues to each active site.

The enzyme catalyses N(6)-(1,2-dicarboxyethyl)-AMP = fumarate + AMP. The catalysed reaction is (2S)-2-[5-amino-1-(5-phospho-beta-D-ribosyl)imidazole-4-carboxamido]succinate = 5-amino-1-(5-phospho-beta-D-ribosyl)imidazole-4-carboxamide + fumarate. Its pathway is purine metabolism; AMP biosynthesis via de novo pathway; AMP from IMP: step 2/2. The protein operates within purine metabolism; IMP biosynthesis via de novo pathway; 5-amino-1-(5-phospho-D-ribosyl)imidazole-4-carboxamide from 5-amino-1-(5-phospho-D-ribosyl)imidazole-4-carboxylate: step 2/2. Functionally, catalyzes two reactions in de novo purine nucleotide biosynthesis. Catalyzes the breakdown of 5-aminoimidazole- (N-succinylocarboxamide) ribotide (SAICAR or 2-[5-amino-1-(5-phospho-beta-D-ribosyl)imidazole-4-carboxamido]succinate) to 5-aminoimidazole-4-carboxamide ribotide (AICAR or 5-amino-1-(5-phospho-beta-D-ribosyl)imidazole-4-carboxamide) and fumarate, and of adenylosuccinate (ADS or N(6)-(1,2-dicarboxyethyl)-AMP) to adenosine monophosphate (AMP) and fumarate. The polypeptide is Adenylosuccinate lyase (purB) (Synechocystis sp. (strain ATCC 27184 / PCC 6803 / Kazusa)).